A 195-amino-acid chain; its full sequence is HTH-type transcriptional regulator BetI (195 aa).

The 61-residue stretch at 8–68 (SIRRRQLIDA…ATMRDITSQL (61 aa)) folds into the HTH tetR-type domain. Residues 31–50 (TIAQIARRAGVSTGIISHYF) constitute a DNA-binding region (H-T-H motif).

Its pathway is amine and polyamine biosynthesis; betaine biosynthesis via choline pathway [regulation]. In terms of biological role, repressor involved in the biosynthesis of the osmoprotectant glycine betaine. It represses transcription of the choline transporter BetT and the genes of BetAB involved in the synthesis of glycine betaine. This chain is HTH-type transcriptional regulator BetI, found in Escherichia coli (strain SMS-3-5 / SECEC).